The primary structure comprises 722 residues: Tegument protein UL46 (722 aa).

The segment at 423–534 is disordered; that stretch reads RLAASGPPGG…AAAARPLAAQ (112 aa). Basic and acidic residues-rich tracts occupy residues 440–451 and 474–491; these read CRDKIQRTRRDN and HREDLPEPPHVDAADRGP. Over residues 510–522 the composition is skewed to pro residues; the sequence is PRLPPRNPAPPEQ. Over residues 523–534 the composition is skewed to low complexity; it reads RPAAAARPLAAQ.

The protein belongs to the herpesviridae HHV-1 VP11/12 protein family. Interacts with VP16. Interacts with host LCK, PIK3R1, SHC1 AND GRB2; these interactions promote the activation of the PI3K/AKT pathway. Interacts with host YWHAB. Interacts with ICP0; this interaction targets UL46 for degradation by the proteasome. Post-translationally, phosphorylated by host LCK. The phosphorylation seems to be lymphocyte-specific.

Its subcellular location is the virion tegument. The protein localises to the host cell membrane. Its function is as follows. Plays a role in the activation of the host PI3K/AKT pathway to promote cell survival. Interacts with and activates host LCK and thereby recruits downstream partners SHC1, GRB2 and PI3KR1 in order to activate the PI3K pathway by phosphorylating host AKT on its activating residues. This mechanism is inhibited by the viral protein US3 that instead promotes incorporation of UL46 into virions. The protein is Tegument protein UL46 of Homo sapiens (Human).